Consider the following 125-residue polypeptide: Immunoglobulin heavy variable 4-39 (125 aa).

The N-terminal stretch at 1 to 26 is a signal peptide; sequence MDLMCKKMKHLWFFLLLVAAPRWVLS. Residues 27–51 form a framework-1 region; sequence QLQLQESGPGLVKPSETLSLTCTVS. An Ig-like domain is found at 27 to 125; the sequence is QLQLQESGPG…ADTAVYYCAR (99 aa). Cys48 and Cys123 are joined by a disulfide. The complementarity-determining-1 stretch occupies residues 52–61; that stretch reads GGSISSSSYY. The framework-2 stretch occupies residues 62–78; the sequence is WGWIRQPPGKGLEWIGS. The interval 79–85 is complementarity-determining-2; it reads IYYSGST. The tract at residues 86–123 is framework-3; it reads YYNPSLKSRVTISVDTSKNQFSLKLSSVTAADTAVYYC. A complementarity-determining-3 region spans residues 124-125; the sequence is AR.

As to quaternary structure, immunoglobulins are composed of two identical heavy chains and two identical light chains; disulfide-linked.

The protein resides in the secreted. Its subcellular location is the cell membrane. V region of the variable domain of immunoglobulin heavy chains that participates in the antigen recognition. Immunoglobulins, also known as antibodies, are membrane-bound or secreted glycoproteins produced by B lymphocytes. In the recognition phase of humoral immunity, the membrane-bound immunoglobulins serve as receptors which, upon binding of a specific antigen, trigger the clonal expansion and differentiation of B lymphocytes into immunoglobulins-secreting plasma cells. Secreted immunoglobulins mediate the effector phase of humoral immunity, which results in the elimination of bound antigens. The antigen binding site is formed by the variable domain of one heavy chain, together with that of its associated light chain. Thus, each immunoglobulin has two antigen binding sites with remarkable affinity for a particular antigen. The variable domains are assembled by a process called V-(D)-J rearrangement and can then be subjected to somatic hypermutations which, after exposure to antigen and selection, allow affinity maturation for a particular antigen. This is Immunoglobulin heavy variable 4-39 from Homo sapiens (Human).